Here is a 145-residue protein sequence, read N- to C-terminus: Protein SprT-like (145 aa).

Residues 4–140 (TNYVQEVSLA…VCGNCHGKLI (137 aa)) form the SprT-like domain. Position 64 (His64) interacts with Zn(2+). Residue Glu65 is part of the active site. His68 is a Zn(2+) binding site.

This sequence belongs to the SprT family. Zn(2+) is required as a cofactor.

It localises to the cytoplasm. This is Protein SprT-like from Streptococcus pyogenes serotype M6 (strain ATCC BAA-946 / MGAS10394).